The primary structure comprises 423 residues: UDP-N-acetylglucosamine 1-carboxyvinyltransferase 2 (423 aa).

Residue 23-24 (KN) participates in phosphoenolpyruvate binding. Position 93 (Arg-93) interacts with UDP-N-acetyl-alpha-D-glucosamine. Residue Cys-117 is the Proton donor of the active site. Cys-117 carries the post-translational modification 2-(S-cysteinyl)pyruvic acid O-phosphothioketal. Residues 122–126 (RPIDQ), Asp-305, and Ile-327 each bind UDP-N-acetyl-alpha-D-glucosamine.

It belongs to the EPSP synthase family. MurA subfamily.

It is found in the cytoplasm. The enzyme catalyses phosphoenolpyruvate + UDP-N-acetyl-alpha-D-glucosamine = UDP-N-acetyl-3-O-(1-carboxyvinyl)-alpha-D-glucosamine + phosphate. Its pathway is cell wall biogenesis; peptidoglycan biosynthesis. Its function is as follows. Cell wall formation. Adds enolpyruvyl to UDP-N-acetylglucosamine. This Listeria innocua serovar 6a (strain ATCC BAA-680 / CLIP 11262) protein is UDP-N-acetylglucosamine 1-carboxyvinyltransferase 2.